The following is a 393-amino-acid chain: Beta-ureidopropionase (393 aa).

The 273-residue stretch at 72–344 folds into the CN hydrolase domain; it reads VRVGLVQNRI…DGLLVTELNL (273 aa). The active-site Proton acceptor is E119. Catalysis depends on K196, which acts as the Proton donor. Catalysis depends on C233, which acts as the Nucleophile. Position 378 is a phosphoserine (S378).

The protein belongs to the carbon-nitrogen hydrolase superfamily. BUP family. As to quaternary structure, homodimer, homotetramer, homooctamer; can also form higher homooligomers.

The protein localises to the cytoplasm. The catalysed reaction is 3-(carbamoylamino)propanoate + H2O + 2 H(+) = beta-alanine + NH4(+) + CO2. It carries out the reaction 3-(carbamoylamino)-2-methylpropanoate + H2O + 2 H(+) = (R)-3-amino-2-methylpropanoate + NH4(+) + CO2. It participates in amino-acid biosynthesis; beta-alanine biosynthesis. Its function is as follows. Catalyzes a late step in pyrimidine degradation. Converts N-carbamoyl-beta-alanine (3-ureidopropanoate) into beta-alanine, ammonia and carbon dioxide. Likewise, converts N-carbamoyl-beta-aminoisobutyrate (3-ureidoisobutyrate) into beta-aminoisobutyrate, ammonia and carbon dioxide. In Mus musculus (Mouse), this protein is Beta-ureidopropionase (Upb1).